Here is a 54-residue protein sequence, read N- to C-terminus: ATP synthase F(0) complex subunit 8 (54 aa).

The chain crosses the membrane as a helical span at residues W9 to I29. The tract at residues N35–W54 is disordered.

The protein belongs to the ATPase protein 8 family. Component of the ATP synthase complex composed at least of ATP5F1A/subunit alpha, ATP5F1B/subunit beta, ATP5MC1/subunit c (homooctomer), MT-ATP6/subunit a, MT-ATP8/subunit 8, ATP5ME/subunit e, ATP5MF/subunit f, ATP5MG/subunit g, ATP5MK/subunit k, ATP5MJ/subunit j, ATP5F1C/subunit gamma, ATP5F1D/subunit delta, ATP5F1E/subunit epsilon, ATP5PF/subunit F6, ATP5PB/subunit b, ATP5PD/subunit d, ATP5PO/subunit OSCP. ATP synthase complex consists of a soluble F(1) head domain (subunits alpha(3) and beta(3)) - the catalytic core - and a membrane F(0) domain - the membrane proton channel (subunits c, a, 8, e, f, g, k and j). These two domains are linked by a central stalk (subunits gamma, delta, and epsilon) rotating inside the F1 region and a stationary peripheral stalk (subunits F6, b, d, and OSCP).

Its subcellular location is the mitochondrion membrane. Subunit 8, of the mitochondrial membrane ATP synthase complex (F(1)F(0) ATP synthase or Complex V) that produces ATP from ADP in the presence of a proton gradient across the membrane which is generated by electron transport complexes of the respiratory chain. ATP synthase complex consist of a soluble F(1) head domain - the catalytic core - and a membrane F(1) domain - the membrane proton channel. These two domains are linked by a central stalk rotating inside the F(1) region and a stationary peripheral stalk. During catalysis, ATP synthesis in the catalytic domain of F(1) is coupled via a rotary mechanism of the central stalk subunits to proton translocation. In vivo, can only synthesize ATP although its ATP hydrolase activity can be activated artificially in vitro. Part of the complex F(0) domain. The polypeptide is ATP synthase F(0) complex subunit 8 (Danio rerio (Zebrafish)).